A 180-amino-acid polypeptide reads, in one-letter code: Large ribosomal subunit protein uL15 (180 aa).

Residues 1 to 62 are disordered; that stretch reads MKKERLEQAS…KTAGRGSKGQ (62 aa).

Belongs to the universal ribosomal protein uL15 family. As to quaternary structure, part of the 50S ribosomal subunit.

Binds to the 23S rRNA. The protein is Large ribosomal subunit protein uL15 of Leptospira interrogans serogroup Icterohaemorrhagiae serovar copenhageni (strain Fiocruz L1-130).